The sequence spans 141 residues: MSLIRCTTSKALKFRQLLKMAARTSVTTPVSREPFSIEDHSLHFKIERYWAAGMIPLIPTAYFIHTPAMDAVLTVAIVLHVHWGIAGVVSDYARPFVIGDTLARVARASVYIITVILLASLLHFNNSDVGLTKAFEMVWSL.

A mitochondrion-targeting transit peptide spans Met1 to Thr24. The Mitochondrial matrix portion of the chain corresponds to Ser25–Phe44. Residues Lys45 to Phe63 traverse the membrane as a helical segment. The Mitochondrial intermembrane portion of the chain corresponds to Ile64–Ala68. The helical transmembrane segment at Met69–Val89 threads the bilayer. His80 serves as a coordination point for heme b. The Mitochondrial matrix portion of the chain corresponds to Ser90 to Arg104. An a ubiquinone-binding site is contributed by Tyr92. The chain crosses the membrane as a helical span at residues Val105–Asn126. The Mitochondrial intermembrane segment spans residues Ser127 to Leu141.

The protein belongs to the CybS family. As to quaternary structure, component of the mitochondrial electron transport chain complex II composed of four subunits: a flavoprotein (Fp), an iron-sulfur protein (Ip), and a large cytochrome b (CybL) subunit and a small cytochrome b (CybS) subunit. There are 2 developmental stage-specific forms of complex II which have the Ip and CybL subunits in common. Complex II from the free-living larvae (aerobic environment) acts as a succinate dehydrogenase and is composed of the common subunit Ip and CybL and the stage specific subunits FpL and CybSL. Complex II from parasitic larvae and adults (anaerobic environment) acts as a fumarate reductase and is composed of the common subunit Ip and CybL and the stage specific subunits FpA and CybSA. Heme b serves as cofactor.

It is found in the mitochondrion inner membrane. Its pathway is carbohydrate metabolism; tricarboxylic acid cycle; fumarate from succinate (eukaryal route): step 1/1. Its function is as follows. Membrane-bound small subunit (CybS) of the mitochondrial electron transport chain complex II, which together with the membrane-bound large subunit (CybL), anchor the catalytic subunits to the inner mitochondria membrane. During the free-living egg-larvae stages, which occur in an aerobic environment, complex II acts as a succinate dehydrogenase by transferring electrons from succinate to ubiquinone. This chain is Succinate dehydrogenase [ubiquinone] cytochrome b small subunit 2, found in Ascaris suum (Pig roundworm).